We begin with the raw amino-acid sequence, 313 residues long: MAPTTTNPMNETIPGSIDIETLIPNLMIIIFGLVGLTGNVILFWLLGFHLHRNAFLVYILNLALADFLFLLCHIINSTMLLLKVHLPNNILNHCFDIIMTVLYITGLSMLSAISTERCLSVLCPIWYRCRRPEHTSTVLCAVIWFLPLLICILNGYFCHFFGPKYVIDSVCLATNFFIRTYPMFLFIVLCLSTLALLARLFCGAGKTKFTRLFVTIMLTVLVFLLCGLPLGFFWFLVPWINRDFSVLDYILFQTSLVLTSVNSCANPIIYFFVGSFRHRLKHKTLKMVLQSALQDTPETPENMVEMSRSKAEP.

The Extracellular segment spans residues 1–25 (MAPTTTNPMNETIPGSIDIETLIPN). The N-linked (GlcNAc...) asparagine glycan is linked to Asn-10. The helical transmembrane segment at 26 to 46 (LMIIIFGLVGLTGNVILFWLL) threads the bilayer. The Cytoplasmic portion of the chain corresponds to 47 to 54 (GFHLHRNA). The chain crosses the membrane as a helical span at residues 55–75 (FLVYILNLALADFLFLLCHII). Residue Asn-76 is glycosylated (N-linked (GlcNAc...) asparagine). Over 76–93 (NSTMLLLKVHLPNNILNH) the chain is Extracellular. A helical transmembrane segment spans residues 94 to 114 (CFDIIMTVLYITGLSMLSAIS). The Cytoplasmic segment spans residues 115 to 137 (TERCLSVLCPIWYRCRRPEHTST). A helical membrane pass occupies residues 138-158 (VLCAVIWFLPLLICILNGYFC). Residues 159–182 (HFFGPKYVIDSVCLATNFFIRTYP) are Extracellular-facing. Residues 183–203 (MFLFIVLCLSTLALLARLFCG) traverse the membrane as a helical segment. Residues 204 to 219 (AGKTKFTRLFVTIMLT) lie on the Cytoplasmic side of the membrane. The helical transmembrane segment at 220–240 (VLVFLLCGLPLGFFWFLVPWI) threads the bilayer. Topologically, residues 241–255 (NRDFSVLDYILFQTS) are extracellular. A helical membrane pass occupies residues 256–276 (LVLTSVNSCANPIIYFFVGSF). Residues 277 to 313 (RHRLKHKTLKMVLQSALQDTPETPENMVEMSRSKAEP) are Cytoplasmic-facing.

This sequence belongs to the G-protein coupled receptor 1 family. Mas subfamily. As to expression, expressed in a subset of sensory neurons that includes nociceptors. Expressed in the subclass of non-peptidergic sensory neurons that are IB4(+) and VR1(-).

The protein resides in the cell membrane. In terms of biological role, orphan receptor. May be a receptor for RFamide-family neuropeptides such as NPFF and NPAF, which are analgesic in vivo. May regulate nociceptor function and/or development, including the sensation or modulation of pain. The protein is Mas-related G-protein coupled receptor member A4 (Mrgpra4) of Mus musculus (Mouse).